The following is a 284-amino-acid chain: Tropomyosin isoforms a/b/d/f (284 aa).

Residues 1–284 (MDAIKKKMQA…DSTFQELSGY (284 aa)) adopt a coiled-coil conformation. The interval 40–78 (EEELRDTQKKMTQTGDDLDKAQEDLSAATSKLEEKEKTV) is disordered.

The protein belongs to the tropomyosin family. In terms of tissue distribution, isoform a and isoform d are expressed in body wall muscles, vulva, anus muscles and male tail muscles. Located to the myofibrils of thin actin filaments.

It is found in the cytoplasm. Its subcellular location is the myofibril. It localises to the sarcomere. The protein resides in the i band. Its function is as follows. Tropomyosin, in association with the troponin complex, plays a central role in the calcium dependent regulation of muscle contraction. Involved in muscle actin filament organization and muscle arm extension and morphology. Protects actin filaments from depolymerization by unc-60 in vitro. Also has a role in male mating behavior by regulating the copulatory spicules. Binds to F-actin. The protein is Tropomyosin isoforms a/b/d/f (lev-11) of Caenorhabditis elegans.